The sequence spans 379 residues: Odorant receptor 33b (379 aa).

At M1–D37 the chain is on the cytoplasmic side. A helical membrane pass occupies residues L38–M58. Over E59–D64 the chain is Extracellular. A helical membrane pass occupies residues V65 to F85. Residues R86 to S129 are Cytoplasmic-facing. The chain crosses the membrane as a helical span at residues F130–G150. At H151–A165 the chain is on the extracellular side. A helical transmembrane segment spans residues T166–L186. The Cytoplasmic segment spans residues Q187 to Q256. A helical membrane pass occupies residues L257 to F277. Residues A278–N281 are Extracellular-facing. Residues F282–C302 form a helical membrane-spanning segment. The Cytoplasmic segment spans residues Y303–G355. Residues I356–M376 traverse the membrane as a helical segment. Residues S377–R379 lie on the Extracellular side of the membrane.

Belongs to the insect chemoreceptor superfamily. Heteromeric odorant receptor channel (TC 1.A.69) family. Or2a subfamily. In terms of assembly, interacts with Orco. Complexes exist early in the endomembrane system in olfactory sensory neurons (OSNs), coupling these complexes to the conserved ciliary trafficking pathway. Expressed in 15 cells in the antenna but not the maxillary palp.

It is found in the cell membrane. Functionally, odorant receptor which mediates acceptance or avoidance behavior, depending on its substrates. The odorant receptor repertoire encodes a large collection of odor stimuli that vary widely in identity, intensity, and duration. May form a complex with Orco to form odorant-sensing units, providing sensitive and prolonged odorant signaling and calcium permeability. Involved in the behavioral responses to pentyl acetate and pyrazines. The protein is Odorant receptor 33b (Or33b) of Drosophila melanogaster (Fruit fly).